The primary structure comprises 102 residues: NADH-quinone oxidoreductase subunit K 1 (102 aa).

Helical transmembrane passes span 5-25 (LYEV…CVVA), 30-50 (VIMM…TFVG), and 62-82 (VFSL…LAMV).

The protein belongs to the complex I subunit 4L family. NDH-1 is composed of 14 different subunits. Subunits NuoA, H, J, K, L, M, N constitute the membrane sector of the complex.

The protein localises to the cell inner membrane. The catalysed reaction is a quinone + NADH + 5 H(+)(in) = a quinol + NAD(+) + 4 H(+)(out). NDH-1 shuttles electrons from NADH, via FMN and iron-sulfur (Fe-S) centers, to quinones in the respiratory chain. The immediate electron acceptor for the enzyme in this species is believed to be ubiquinone. Couples the redox reaction to proton translocation (for every two electrons transferred, four hydrogen ions are translocated across the cytoplasmic membrane), and thus conserves the redox energy in a proton gradient. The protein is NADH-quinone oxidoreductase subunit K 1 of Citrifermentans bemidjiense (strain ATCC BAA-1014 / DSM 16622 / JCM 12645 / Bem) (Geobacter bemidjiensis).